Reading from the N-terminus, the 329-residue chain is Glucosyl-3-phosphoglycerate synthase (329 aa).

UDP-alpha-D-glucose is bound by residues 55–59, serine 86, lysine 119, and 139–141; these read PALDE and DSD. Residue aspartate 141 participates in Mn(2+) binding. A (2R)-3-phosphoglycerate-binding site is contributed by 189–192; sequence GRVT. 234–237 lines the UDP-alpha-D-glucose pocket; the sequence is YGVE. Histidine 263 serves as a coordination point for Mn(2+). Asparagine 265 contributes to the (2R)-3-phosphoglycerate binding site.

Belongs to the glycosyltransferase 2 family. Homodimer. It depends on Mg(2+) as a cofactor. The cofactor is Mn(2+).

It carries out the reaction an NDP-alpha-D-glucose + (2R)-3-phosphoglycerate = (2R)-2-O-(alpha-D-glucopyranosyl)-3-phospho-glycerate + a ribonucleoside 5'-diphosphate + H(+). The enzyme catalyses (2R)-3-phosphoglycerate + UDP-alpha-D-glucose = (2R)-2-O-(alpha-D-glucopyranosyl)-3-phospho-glycerate + UDP + H(+). It catalyses the reaction GDP-D-glucose + (2R)-3-phosphoglycerate = (2R)-2-O-(alpha-D-glucopyranosyl)-3-phospho-glycerate + GDP + H(+). Involved in the biosynthesis of 6-O-methylglucose lipopolysaccarides (MGLPs). Catalyzes the transfer of the glucose moiety from UDP-alpha-D-glucose (UDP-Glc) to the position 2 of 3-phospho-D-glycerate (3-PGA) to form glucosyl-3-phosphoglycerate (GPG). To a lesser extent can also use GDP-Glc but not UDP-Gal or UDP-GlcNAc as the sugar donor. This chain is Glucosyl-3-phosphoglycerate synthase, found in Mycolicibacterium paratuberculosis (strain ATCC BAA-968 / K-10) (Mycobacterium paratuberculosis).